The chain runs to 333 residues: tRNA-modifying protein YgfZ (333 aa).

Residues W33 and W195 each coordinate folate.

It belongs to the tRNA-modifying YgfZ family.

The protein resides in the cytoplasm. Its function is as follows. Folate-binding protein involved in regulating the level of ATP-DnaA and in the modification of some tRNAs. It is probably a key factor in regulatory networks that act via tRNA modification, such as initiation of chromosomal replication. In Pectobacterium carotovorum subsp. carotovorum (strain PC1), this protein is tRNA-modifying protein YgfZ.